The chain runs to 401 residues: MAKKKCVLAYSGGLDTSVAIHWIKENYDADVVALAVDVGANDKDLEFIRQKALSIGAVKSYVYDARKEFAYDFILPTLQANACYESKYYLSAALSRPLIAKLLVQIAEEEGADFVAHGCTGKGNDQVRFEVSVAALNPNLQVLAPVREWGWSREEEIDYAQKHGIPVPVGKENPFSIDVNLWGRSCEAGVLEDPWAEAPEEAFEWTVNPKDAPDEPEYVEIGFEQGVPVSLNGEALDLVTLIERLHAIAGRHGVGRIDHVENRLVGIKSREVYEMPAAAVLTLAHKELETITLPRELHHFKLGLEQKYAELVYNGLWFHPLKEALDAFIKKSQETVTGTVRVRLFKGSAFCVGRTSPYTLYSYDLATYDKADKFDHKAAKGFIDIFGLPTKVYAAVQKSKA.

Residue 9–17 (AYSGGLDTS) participates in ATP binding. Residue tyrosine 88 participates in L-citrulline binding. Position 118 (glycine 118) interacts with ATP. The L-aspartate site is built by threonine 120, asparagine 124, and aspartate 125. Asparagine 124 contacts L-citrulline. L-citrulline-binding residues include arginine 128, serine 176, serine 185, glutamate 261, and tyrosine 273.

It belongs to the argininosuccinate synthase family. Type 1 subfamily. In terms of assembly, homotetramer.

The protein localises to the cytoplasm. It catalyses the reaction L-citrulline + L-aspartate + ATP = 2-(N(omega)-L-arginino)succinate + AMP + diphosphate + H(+). The protein operates within amino-acid biosynthesis; L-arginine biosynthesis; L-arginine from L-ornithine and carbamoyl phosphate: step 2/3. This Symbiobacterium thermophilum (strain DSM 24528 / JCM 14929 / IAM 14863 / T) protein is Argininosuccinate synthase.